The sequence spans 104 residues: Large ribosomal subunit protein bL21 (104 aa).

It belongs to the bacterial ribosomal protein bL21 family. In terms of assembly, part of the 50S ribosomal subunit. Contacts protein L20.

Its function is as follows. This protein binds to 23S rRNA in the presence of protein L20. This is Large ribosomal subunit protein bL21 from Pseudomonas putida (strain GB-1).